The sequence spans 148 residues: Large ribosomal subunit protein bL9 (148 aa).

This sequence belongs to the bacterial ribosomal protein bL9 family.

Its function is as follows. Binds to the 23S rRNA. The polypeptide is Large ribosomal subunit protein bL9 (Listeria monocytogenes serotype 4a (strain HCC23)).